Consider the following 270-residue polypeptide: Sugar phosphatase YidA (270 aa).

The Nucleophile role is filled by aspartate 9. Aspartate 9 serves as a coordination point for Mg(2+). Methionine 10 is a phosphate binding site. A Mg(2+)-binding site is contributed by aspartate 11. Residues 43 to 44 (TG) and lysine 197 each bind phosphate. Residue aspartate 220 participates in Mg(2+) binding. Position 223 (asparagine 223) interacts with phosphate.

It belongs to the HAD-like hydrolase superfamily. Cof family. In terms of assembly, homodimer. Mg(2+) is required as a cofactor.

The catalysed reaction is sugar phosphate + H2O = sugar + phosphate.. Catalyzes the dephosphorylation of different sugar phosphates. The sequence is that of Sugar phosphatase YidA (yidA) from Escherichia coli O6:H1 (strain CFT073 / ATCC 700928 / UPEC).